Here is a 127-residue protein sequence, read N- to C-terminus: Gamma-synuclein (127 aa).

Tandem repeats lie at residues 20–30 (EKTKQGVTEAA) and 31–41 (EKTKEGVMYVG). A 4 X 11 AA tandem repeats of [EGSA]-K-T-K-[EQ]-[GQ]-V-X(4) region spans residues 20-67 (EKTKQGVTEAAEKTKEGVMYVGTKTKENVVHSVTSVAEKTKEQANAVS). A 3; approximate repeat occupies 42–56 (TKTKENVVHSVTSVA). The stretch at 57 to 67 (EKTKEQANAVS) is repeat 4. A phosphoserine mark is found at S67 and S72. The tract at residues 97–127 (KEDLKPSAPQQEGEAAKEKEEVAEEAQSGGD) is disordered. The residue at position 124 (S124) is a Phosphoserine; by BARK1, CaMK2 and CK2.

Belongs to the synuclein family. As to quaternary structure, may be a centrosome-associated protein. Interacts with MYOC; affects its secretion and its aggregation. Phosphorylated. Phosphorylation by GRK5 appears to occur on residues distinct from the residue phosphorylated by other kinases.

The protein localises to the cytoplasm. It localises to the perinuclear region. Its subcellular location is the cytoskeleton. It is found in the microtubule organizing center. The protein resides in the centrosome. The protein localises to the spindle. Plays a role in neurofilament network integrity. May be involved in modulating axonal architecture during development and in the adult. In vitro, increases the susceptibility of neurofilament-H to calcium-dependent proteases. May also function in modulating the keratin network in skin. Activates the MAPK and Elk-1 signal transduction pathway. This chain is Gamma-synuclein (SNCG), found in Macaca fascicularis (Crab-eating macaque).